A 492-amino-acid chain; its full sequence is Steroid 21-hydroxylase (492 aa).

Residues arginine 91 and lysine 120 each contribute to the heme b site. Arginine 231 is a binding site for 17alpha-hydroxyprogesterone. Arginine 231 is a progesterone binding site. Residues histidine 363, arginine 424, and cysteine 426 each coordinate heme b.

The protein belongs to the cytochrome P450 family. The cofactor is heme b.

The protein localises to the endoplasmic reticulum membrane. The protein resides in the microsome membrane. The catalysed reaction is 17alpha-hydroxyprogesterone + reduced [NADPH--hemoprotein reductase] + O2 = 11-deoxycortisol + oxidized [NADPH--hemoprotein reductase] + H2O + H(+). The enzyme catalyses progesterone + reduced [NADPH--hemoprotein reductase] + O2 = 21-hydroxyprogesterone + oxidized [NADPH--hemoprotein reductase] + H2O + H(+). Specifically catalyzes the 21-hydroxylation of steroids. Required for the adrenal synthesis of mineralocorticoids and glucocorticoids. The protein is Steroid 21-hydroxylase (CYP21) of Felis catus (Cat).